Consider the following 178-residue polypeptide: Protein GrpE (178 aa).

Positions 1–26 (MQDQDKYAEQAASMEEPASADAPAIV) are disordered.

It belongs to the GrpE family. Homodimer.

Its subcellular location is the cytoplasm. Participates actively in the response to hyperosmotic and heat shock by preventing the aggregation of stress-denatured proteins, in association with DnaK and GrpE. It is the nucleotide exchange factor for DnaK and may function as a thermosensor. Unfolded proteins bind initially to DnaJ; upon interaction with the DnaJ-bound protein, DnaK hydrolyzes its bound ATP, resulting in the formation of a stable complex. GrpE releases ADP from DnaK; ATP binding to DnaK triggers the release of the substrate protein, thus completing the reaction cycle. Several rounds of ATP-dependent interactions between DnaJ, DnaK and GrpE are required for fully efficient folding. The chain is Protein GrpE from Herminiimonas arsenicoxydans.